We begin with the raw amino-acid sequence, 116 residues long: Fluoride-specific ion channel FluC 1 (116 aa).

Transmembrane regions (helical) follow at residues Met1–Val21, Ile31–Phe51, Met58–Tyr78, and Phe92–Leu112. Residues Gly68 and Thr71 each coordinate Na(+).

This sequence belongs to the fluoride channel Fluc/FEX (TC 1.A.43) family.

The protein localises to the cell membrane. It carries out the reaction fluoride(in) = fluoride(out). Na(+) is not transported, but it plays an essential structural role and its presence is essential for fluoride channel function. Its function is as follows. Fluoride-specific ion channel. Important for reducing fluoride concentration in the cell, thus reducing its toxicity. The chain is Fluoride-specific ion channel FluC 1 from Methanosarcina barkeri (strain Fusaro / DSM 804).